Here is a 31-residue protein sequence, read N- to C-terminus: Sarcolipin (31 aa).

The Cytoplasmic segment spans residues 1-7; that stretch reads MERSTQE. A helical transmembrane segment spans residues 8 to 26; that stretch reads LFINFTVVLITVLLMWLLV. Over 27–31 the chain is Lumenal; the sequence is RSYQY.

It belongs to the sarcolipin family. In terms of assembly, homooligomer. Can also form heterooligomers with other sarcoplasmic/endoplasmic reticulum calcium ATPase (SERCA) regulators ARLN, ERLN, PLN and STRIT1/DWORF. Monomer. Interacts with calcium ATPase ATP2A1/SERCA1. Interacts as a monomer with ATP2A2/SERCA2; the interaction decreases ATP2A2 Ca(2+) affinity. Interacts with VMP1; VMP1 competes with PLN and SLN to prevent them from forming an inhibitory complex with ATP2A2.

The protein localises to the sarcoplasmic reticulum membrane. It localises to the endoplasmic reticulum membrane. In terms of biological role, reversibly inhibits the activity of ATP2A1/SERCA1 and ATP2A2/SERCA2 in sarcoplasmic reticulum by decreasing the apparent affinity of the ATPase for Ca(2+). Also inhibits the activity of ATP2A3/SERCA3. Modulates calcium re-uptake during muscle relaxation and plays an important role in calcium homeostasis in muscle. Required for muscle-based, non-shivering thermogenesis. The polypeptide is Sarcolipin (Sln) (Rattus norvegicus (Rat)).